The following is a 510-amino-acid chain: Histidine ammonia-lyase (510 aa).

The 5-imidazolinone (Ala-Gly) cross-link spans 143–145; that stretch reads ASG. 2,3-didehydroalanine (Ser) is present on Ser144.

It belongs to the PAL/histidase family. Contains an active site 4-methylidene-imidazol-5-one (MIO), which is formed autocatalytically by cyclization and dehydration of residues Ala-Ser-Gly.

The protein localises to the cytoplasm. It carries out the reaction L-histidine = trans-urocanate + NH4(+). Its pathway is amino-acid degradation; L-histidine degradation into L-glutamate; N-formimidoyl-L-glutamate from L-histidine: step 1/3. The protein is Histidine ammonia-lyase of Aliivibrio fischeri (strain ATCC 700601 / ES114) (Vibrio fischeri).